A 148-amino-acid chain; its full sequence is Nucleoside diphosphate kinase (148 aa).

Lys-9, Phe-57, Arg-85, Thr-91, Arg-102, and Asn-112 together coordinate ATP. Thr-91 carries the phosphothreonine modification. Catalysis depends on His-115, which acts as the Pros-phosphohistidine intermediate. Ser-122 is subject to Phosphoserine.

This sequence belongs to the NDK family. Homotetramer. The cofactor is Mg(2+).

The protein localises to the cytoplasm. It carries out the reaction a 2'-deoxyribonucleoside 5'-diphosphate + ATP = a 2'-deoxyribonucleoside 5'-triphosphate + ADP. The enzyme catalyses a ribonucleoside 5'-diphosphate + ATP = a ribonucleoside 5'-triphosphate + ADP. Its function is as follows. Major role in the synthesis of nucleoside triphosphates other than ATP. The ATP gamma phosphate is transferred to the NDP beta phosphate via a ping-pong mechanism, using a phosphorylated active-site intermediate. This chain is Nucleoside diphosphate kinase, found in Oceanobacillus iheyensis (strain DSM 14371 / CIP 107618 / JCM 11309 / KCTC 3954 / HTE831).